The primary structure comprises 619 residues: Xyloglucan galactosyltransferase MUR3 (619 aa).

A disordered region spans residues 1–26; sequence MFPRVSMRRRSAEVSPTEPMEKGNGK. At 1–33 the chain is on the cytoplasmic side; the sequence is MFPRVSMRRRSAEVSPTEPMEKGNGKNQTNRIC. A helical; Signal-anchor for type II membrane protein transmembrane segment spans residues 34–54; sequence LLVALSLFFWALLLYFHFVVL. The Lumenal segment spans residues 55-619; it reads GTSNIDKQLQ…WKSEQRDKTQ (565 aa). Asparagine 116, asparagine 146, asparagine 231, asparagine 257, asparagine 319, asparagine 465, and asparagine 482 each carry an N-linked (GlcNAc...) asparagine glycan. The segment at 576-619 is disordered; it reads HVWDPFFSKPKPGEDGSSDGNGGTTISADAAKNSWKSEQRDKTQ. Basic and acidic residues predominate over residues 610-619; it reads WKSEQRDKTQ.

Belongs to the glycosyltransferase 47 family. In terms of assembly, interacts with CSLC4 and FUT1. In terms of tissue distribution, ubiquitous.

It is found in the golgi apparatus. It localises to the golgi stack membrane. The protein resides in the golgi apparatus membrane. Its function is as follows. Involved in the attachment of the Gal residue on the third xylosyl unit within the XXXG core structure of xyloglucan, the principal glycan that interlaces the cellulose microfibrils in plant cell wall. Associates with other xyloglucan-synthesizing enzymes to form multiprotein complexes for xyloglucan synthesis in the Golgi. Interacts with actin and is required for the proper endomembrane organization and for the cell elongation. Not involved in the trafficking from the endoplasmic reticulum to the vacuoles. Involved in salt stress tolerance. Participates in the control of the expression of genes encoding for proteins involved in reactive oxygen species (ROS) detoxification under salt stress. May contribute to the maintenance of the proper organization of actin microfilaments during salt stress-induced ROS production. The chain is Xyloglucan galactosyltransferase MUR3 from Arabidopsis thaliana (Mouse-ear cress).